The chain runs to 127 residues: Aspartate 1-decarboxylase (127 aa).

The Schiff-base intermediate with substrate; via pyruvic acid role is filled by S25. S25 is modified (pyruvic acid (Ser)). T57 lines the substrate pocket. The Proton donor role is filled by Y58. A substrate-binding site is contributed by 73–75 (GAA).

The protein belongs to the PanD family. As to quaternary structure, heterooctamer of four alpha and four beta subunits. Pyruvate serves as cofactor. In terms of processing, is synthesized initially as an inactive proenzyme, which is activated by self-cleavage at a specific serine bond to produce a beta-subunit with a hydroxyl group at its C-terminus and an alpha-subunit with a pyruvoyl group at its N-terminus.

Its subcellular location is the cytoplasm. The enzyme catalyses L-aspartate + H(+) = beta-alanine + CO2. It participates in cofactor biosynthesis; (R)-pantothenate biosynthesis; beta-alanine from L-aspartate: step 1/1. Catalyzes the pyruvoyl-dependent decarboxylation of aspartate to produce beta-alanine. The polypeptide is Aspartate 1-decarboxylase (Clostridium kluyveri (strain NBRC 12016)).